We begin with the raw amino-acid sequence, 139 residues long: Large ribosomal subunit protein uL16 (139 aa).

Residues 1-17 (MLMPKRVKYRKTQRGRM) show a composition bias toward basic residues. Residues 1 to 24 (MLMPKRVKYRKTQRGRMKGNSGRG) form a disordered region.

This sequence belongs to the universal ribosomal protein uL16 family. As to quaternary structure, part of the 50S ribosomal subunit.

Binds 23S rRNA and is also seen to make contacts with the A and possibly P site tRNAs. This is Large ribosomal subunit protein uL16 from Pelodictyon phaeoclathratiforme (strain DSM 5477 / BU-1).